The sequence spans 141 residues: Decarboxylase CPUR_05434 (141 aa).

The region spanning 26 to 121 (EGMSEEAYRN…MHDHEMFADT (96 aa)) is the EthD domain.

It belongs to the tpcK family.

The enzyme catalyses atrochrysone carboxylate + H(+) = atrochrysone + CO2. Decarboxylase; part of the ergochrome gene cluster responsible for the typical purple-black color of the ergot sclerotia. The ergochrome gene cluster produces several ergot pigments including the yellow ergochrome secalonic acid and its derivatives, as well as the red anthraquinones endocrocin and clavorubin. The pathway begins with the synthesis of atrochrysone thioester by the polyketide synthase (PKS) CPUR_05437. The atrochrysone carboxyl ACP thioesterase CPUR_05436 then breaks the thioester bond and releases the atrochrysone carboxylic acid from CPUR_05437. The decarboxylase CPUR_05434 then catalyzes the concerted decarboxylation-elimination required to convert atochrysone carboxylic acid into emodin anthrone, which is further oxidized to emodin by the anthrone oxygenase CPUR_05435. Emodin is further modified to yield monodictyphenone via several steps involving CPUR_05427, CPUR_05428, CPUR_05429 and CPUR_05430. The short chain dehydrogenase/reductase CPUR_05418 then catalyzes the C-5 ketoreduction to give the xanthone skeleton of the monomeric units. Ergochromes formation requires further dimerization steps of different xanthone units, probably catalyzed by the cytochrome P450 monooxygenase CPUR_05419. CPUR_05425, CPUR_05426 and CPUR_05431 are unique to Claviceps, thus it is likely that they are involved in further modification of xanthone units or in their dimerization. The yellow ergochromes and the red anthraquinone pigments endocrocin and clavorubin are products from the same PKS derived precursors and the latter are likely shunt products in the pathway of xanthone biosynthesis. It is proposed that atrochrysone carboxylic acid released from the PKS CPUR_05437 can also be converted to endocrocin anthrone which is further oxidized into endocrocin by CPUR_05435. Endocrocin could be then modified to clavorubin, possibly by CPUR_05423 and CPUR_05431. Clavorubin is the principal anthraquinone metabolite produced by the cluster with a much higher yield compared to endocrocin. This Claviceps purpurea (strain 20.1) (Ergot fungus) protein is Decarboxylase CPUR_05434.